The sequence spans 242 residues: UPF0246 protein SPCG_1533 (242 aa).

Belongs to the UPF0246 family.

This chain is UPF0246 protein SPCG_1533, found in Streptococcus pneumoniae (strain CGSP14).